Here is a 501-residue protein sequence, read N- to C-terminus: 2,3-bisphosphoglycerate-independent phosphoglycerate mutase (501 aa).

Mn(2+) is bound by residues Asp-12 and Ser-62. Residue Ser-62 is the Phosphoserine intermediate of the active site. Substrate-binding positions include His-121, 150-151 (RD), Arg-182, Arg-188, 253-256 (RSDR), and Lys-322. 5 residues coordinate Mn(2+): Asp-389, His-393, Asp-430, His-431, and His-449.

This sequence belongs to the BPG-independent phosphoglycerate mutase family. As to quaternary structure, monomer. The cofactor is Mn(2+).

The catalysed reaction is (2R)-2-phosphoglycerate = (2R)-3-phosphoglycerate. It functions in the pathway carbohydrate degradation; glycolysis; pyruvate from D-glyceraldehyde 3-phosphate: step 3/5. Catalyzes the interconversion of 2-phosphoglycerate and 3-phosphoglycerate. This is 2,3-bisphosphoglycerate-independent phosphoglycerate mutase from Ehrlichia ruminantium (strain Gardel).